The primary structure comprises 335 residues: AA9 family lytic polysaccharide monooxygenase A (335 aa).

The N-terminal stretch at Met-1–Ala-21 is a signal peptide. 2 residues coordinate Cu(2+): His-22 and His-107. Cys-77 and Cys-196 form a disulfide bridge. Residues His-182 and Gln-191 each contribute to the O2 site. Tyr-193 serves as a coordination point for Cu(2+). Residues Pro-241–Asn-335 form a disordered region. The span at Gly-251–Ala-303 shows a compositional bias: low complexity. Basic residues predominate over residues Cys-321–Asn-335.

The protein belongs to the polysaccharide monooxygenase AA9 family. Cu(2+) is required as a cofactor.

The protein localises to the secreted. It catalyses the reaction [(1-&gt;4)-beta-D-glucosyl]n+m + reduced acceptor + O2 = 4-dehydro-beta-D-glucosyl-[(1-&gt;4)-beta-D-glucosyl]n-1 + [(1-&gt;4)-beta-D-glucosyl]m + acceptor + H2O.. Functionally, lytic polysaccharide monooxygenase (LPMO) that depolymerizes crystalline and amorphous polysaccharides via the oxidation of scissile alpha- or beta-(1-4)-glycosidic bonds, yielding C1 or C4 oxidation products. Catalysis by LPMOs requires the reduction of the active-site copper from Cu(II) to Cu(I) by a reducing agent and H(2)O(2) or O(2) as a cosubstrate. Is capable of cleaving cellulose, but not chitin. Is also active on tamarind xyloglucan and longer xyloglucan oligosaccharides. Has no activity toward shorter cellooligosaccharides (Glc3-6), as well as toward the xyloglucan-heptamer, birchwood xylan, wheat arabinoxylan, konjac glucomannan, ivory nut mannan, beta-glucan from barley, lichenan from Icelandic moss, starch, and spruce galactoglucomannan. Has unprecedented broad specificity on xyloglucan, cleaving any glycosidicbond in theb-glucan main chain, regardless of xylosyl substitutions. When incubated with a mixture of xyloglucan and cellulose, efficiently attacks the xyloglucan, whereas cellulose conversion is inhibited, suggesting that removal of hemicellulose may be the true function of this LPMO during biomass conversion. The protein is AA9 family lytic polysaccharide monooxygenase A of Gibberella zeae (strain ATCC MYA-4620 / CBS 123657 / FGSC 9075 / NRRL 31084 / PH-1) (Wheat head blight fungus).